The chain runs to 308 residues: Sulfate adenylyltransferase subunit 2 (308 aa).

It belongs to the PAPS reductase family. CysD subfamily. Heterodimer composed of CysD, the smaller subunit, and CysN.

The catalysed reaction is sulfate + ATP + H(+) = adenosine 5'-phosphosulfate + diphosphate. It functions in the pathway sulfur metabolism; hydrogen sulfide biosynthesis; sulfite from sulfate: step 1/3. Functionally, with CysN forms the ATP sulfurylase (ATPS) that catalyzes the adenylation of sulfate producing adenosine 5'-phosphosulfate (APS) and diphosphate, the first enzymatic step in sulfur assimilation pathway. APS synthesis involves the formation of a high-energy phosphoric-sulfuric acid anhydride bond driven by GTP hydrolysis by CysN coupled to ATP hydrolysis by CysD. The polypeptide is Sulfate adenylyltransferase subunit 2 (Chromobacterium violaceum (strain ATCC 12472 / DSM 30191 / JCM 1249 / CCUG 213 / NBRC 12614 / NCIMB 9131 / NCTC 9757 / MK)).